Here is a 281-residue protein sequence, read N- to C-terminus: Probable endonuclease 4 (281 aa).

Residues H69, H109, E145, D179, H182, H216, D229, H231, and E261 each coordinate Zn(2+).

Belongs to the AP endonuclease 2 family. It depends on Zn(2+) as a cofactor.

The catalysed reaction is Endonucleolytic cleavage to 5'-phosphooligonucleotide end-products.. In terms of biological role, endonuclease IV plays a role in DNA repair. It cleaves phosphodiester bonds at apurinic or apyrimidinic (AP) sites, generating a 3'-hydroxyl group and a 5'-terminal sugar phosphate. This is Probable endonuclease 4 from Nautilia profundicola (strain ATCC BAA-1463 / DSM 18972 / AmH).